Consider the following 291-residue polypeptide: Porphobilinogen deaminase (291 aa).

An S-(dipyrrolylmethanemethyl)cysteine modification is found at C233.

It belongs to the HMBS family. In terms of assembly, monomer. The cofactor is dipyrromethane.

It carries out the reaction 4 porphobilinogen + H2O = hydroxymethylbilane + 4 NH4(+). It functions in the pathway porphyrin-containing compound metabolism; protoporphyrin-IX biosynthesis; coproporphyrinogen-III from 5-aminolevulinate: step 2/4. In terms of biological role, tetrapolymerization of the monopyrrole PBG into the hydroxymethylbilane pre-uroporphyrinogen in several discrete steps. This is Porphobilinogen deaminase (hemC) from Ruminiclostridium josui (Clostridium josui).